The following is a 179-amino-acid chain: Nuclear transcription factor Y subunit B (179 aa).

Positions 1–32 (MAEAPASPGGGGGSHESGSPRGGGGGGSVREQ) are disordered. The segment covering 8–28 (PGGGGGSHESGSPRGGGGGGS) has biased composition (gly residues). A DNA-binding region spans residues 36–42 (LPIANIS). Positions 63-74 (VQECVSEFISFI) are subunit association domain (SAD). Residues 147–179 (SSSAAEGMGQQGAYNQGMGYMQPQYHNGDISNV) form a disordered region.

Belongs to the NFYB/HAP3 subunit family. In terms of assembly, heterotrimeric transcription factor composed of three components, NF-YA, NF-YB and NF-YC. NF-YB and NF-YC must interact and dimerize for NF-YA association and DNA binding.

It localises to the nucleus. Its function is as follows. Component of the NF-Y/HAP transcription factor complex. The NF-Y complex stimulates the transcription of various genes by recognizing and binding to a CCAAT motif in promoters. The polypeptide is Nuclear transcription factor Y subunit B (NFY2) (Zea mays (Maize)).